We begin with the raw amino-acid sequence, 539 residues long: Acid-sensing ion channel 4-A (539 aa).

Topologically, residues 1-68 (MPIEFVCKIK…SGRLGVRQTL (68 aa)) are cytoplasmic. The helical transmembrane segment at 69-89 (WALAFLVSLALFLYQAAKCAI) threads the bilayer. Residues 90 to 432 (SYLEHPHVTA…EQKKAYDVAG (343 aa)) are Extracellular-facing. Intrachain disulfides connect cysteine 116/cysteine 200 and cysteine 178/cysteine 185. Residues asparagine 136, asparagine 165, asparagine 179, asparagine 184, asparagine 206, and asparagine 241 are each glycosylated (N-linked (GlcNAc...) asparagine). 5 disulfide bridges follow: cysteine 294–cysteine 369, cysteine 313–cysteine 365, cysteine 317–cysteine 363, cysteine 326–cysteine 347, and cysteine 328–cysteine 340. A glycan (N-linked (GlcNAc...) asparagine) is linked at asparagine 370. The helical transmembrane segment at 433 to 453 (LLGDIGGQMGLFIGASVLTIL) threads the bilayer. The GAS motif; ion selectivity filter motif lies at 446-448 (GAS). The Cytoplasmic portion of the chain corresponds to 454–539 (EILDYVYEVI…HHRVSEDFAC (86 aa)). A disordered region spans residues 474–494 (QRDDKKQTQQQQQASTVATVN).

It belongs to the amiloride-sensitive sodium channel (TC 1.A.6) family. ASIC4 subfamily. As to quaternary structure, homotrimer. Heterotrimer; with other ASIC proteins producing functional channels. In terms of tissue distribution, expressed in central nervous system.

Its subcellular location is the cell membrane. It catalyses the reaction Na(+)(in) = Na(+)(out). Its activity is regulated as follows. Inhibited by the diuretic drug amiloride. Functionally, could form pH-gated trimeric sodium channels and function as a postsynaptic excitatory receptors in the nervous system. The chain is Acid-sensing ion channel 4-A from Danio rerio (Zebrafish).